Consider the following 264-residue polypeptide: NADH-quinone oxidoreductase subunit I 2 (264 aa).

2 consecutive 4Fe-4S ferredoxin-type domains span residues 57-86 and 98-127; these read GFLE…ISLE and TQFD…HTRE. [4Fe-4S] cluster contacts are provided by Cys-66, Cys-69, Cys-72, Cys-76, Cys-107, Cys-110, Cys-113, and Cys-117. Residues 183–264 are disordered; sequence APQFLPPEPP…AAPAANPESK (82 aa). Positions 197–264 are enriched in low complexity; sequence AKPAAKAAPA…AAPAANPESK (68 aa).

The protein belongs to the complex I 23 kDa subunit family. NDH-1 is composed of 14 different subunits. Subunits NuoA, H, J, K, L, M, N constitute the membrane sector of the complex. [4Fe-4S] cluster is required as a cofactor.

The protein resides in the cell inner membrane. The enzyme catalyses a quinone + NADH + 5 H(+)(in) = a quinol + NAD(+) + 4 H(+)(out). NDH-1 shuttles electrons from NADH, via FMN and iron-sulfur (Fe-S) centers, to quinones in the respiratory chain. The immediate electron acceptor for the enzyme in this species is believed to be ubiquinone. Couples the redox reaction to proton translocation (for every two electrons transferred, four hydrogen ions are translocated across the cytoplasmic membrane), and thus conserves the redox energy in a proton gradient. The protein is NADH-quinone oxidoreductase subunit I 2 of Anaeromyxobacter dehalogenans (strain 2CP-C).